Reading from the N-terminus, the 323-residue chain is Sphingolipid delta(4)-desaturase DES1 (323 aa).

Glycine 2 carries the N-myristoyl glycine lipid modification. Transmembrane regions (helical) follow at residues 41-61 (HNLI…FYLV) and 68-88 (WVIF…TLAI). The Histidine box-1 motif lies at 89–93 (HEISH). The chain crosses the membrane as a helical span at residues 104–124 (WNRWFGMFANLSLGVPYSISF). Positions 128–132 (HMDHH) match the Histidine box-2 motif. Transmembrane regions (helical) follow at residues 152–172 (FFCT…FYAF), 184–204 (YLEI…YYVF), and 209–229 (LVYM…SGHF). The Histidine box-3 signature appears at 259–263 (HNEHH). Serine 307 carries the phosphoserine modification.

It belongs to the fatty acid desaturase type 1 family. DEGS subfamily. In terms of assembly, interacts with RLBP1; the interaction increases synthesis of chromophore-precursors by DEGS1. Myristoylation can target the enzyme to the mitochondria leading to an increase in ceramide levels. Detected in testis. Detected in pachytene spermatocytes and round spermatids. Expressed in retina and retinal pigment epithelium by Mueller cells (at protein level).

It localises to the mitochondrion membrane. The protein localises to the endoplasmic reticulum membrane. The catalysed reaction is an N-acylsphinganine + 2 Fe(II)-[cytochrome b5] + O2 + 2 H(+) = an N-acylsphing-4-enine + 2 Fe(III)-[cytochrome b5] + 2 H2O. It carries out the reaction all-trans-retinol = 11-cis-retinol. The enzyme catalyses all-trans-retinol = 9-cis-retinol. It catalyses the reaction all-trans-retinol = 13-cis-retinol. The catalysed reaction is 11-cis-retinol = 13-cis-retinol. It carries out the reaction 11-cis-retinol = 9-cis-retinol. Has sphingolipid-delta-4-desaturase activity. Converts D-erythro-sphinganine to D-erythro-sphingosine (E-sphing-4-enine). Catalyzes the equilibrium isomerization of retinols. The protein is Sphingolipid delta(4)-desaturase DES1 of Mus musculus (Mouse).